Here is an 853-residue protein sequence, read N- to C-terminus: DNA mismatch repair protein MutS (853 aa).

614 to 621 (GPNMGGKS) lines the ATP pocket.

Belongs to the DNA mismatch repair MutS family.

In terms of biological role, this protein is involved in the repair of mismatches in DNA. It is possible that it carries out the mismatch recognition step. This protein has a weak ATPase activity. The chain is DNA mismatch repair protein MutS from Shigella boydii serotype 18 (strain CDC 3083-94 / BS512).